A 130-amino-acid chain; its full sequence is Small ribosomal subunit protein uS9 (130 aa).

Belongs to the universal ribosomal protein uS9 family.

This Marinobacter nauticus (strain ATCC 700491 / DSM 11845 / VT8) (Marinobacter aquaeolei) protein is Small ribosomal subunit protein uS9.